The chain runs to 205 residues: Gap junction epsilon-1 protein (205 aa).

At 1 to 23 (MSLNYIKNFYEGCVKPPTVIGQF) the chain is on the cytoplasmic side. The chain crosses the membrane as a helical span at residues 24 to 44 (HTLFFGSIRIFFLGVLGFAVY). Residues 45 to 76 (GNEALHFICDPDKREVNLFCYNQFRPITPQVS) are Extracellular-facing. Intrachain disulfides connect Cys-53–Cys-161 and Cys-64–Cys-148. The chain crosses the membrane as a helical span at residues 77–97 (FSALQLVIVLVPGALFHLYAA). Over 98 to 112 (CKSINQECILQKPIY) the chain is Cytoplasmic. The helical transmembrane segment at 113–133 (TIIYILSVLLRISLAAIAFWL) threads the bilayer. Residues 134-170 (QIYLFGFQVKSLYLCDARSLGENMIIRCMVPEHFEKT) are Extracellular-facing. Residues 171-191 (IFLIAINTFTTITILLFVAEI) form a helical membrane-spanning segment. Residues 192-205 (FEIIFRRLYFPFRQ) are Cytoplasmic-facing.

It belongs to the connexin family. Beta-type (group I) subfamily. In terms of assembly, a connexon is composed of a hexamer of connexins. Not detected in lens or retina.

The protein localises to the cell membrane. In terms of biological role, mediates calcium-independent ATP release, suggesting activity as a hemichannel. Does not form functional gap junctions. This Homo sapiens (Human) protein is Gap junction epsilon-1 protein (GJE1).